Here is a 331-residue protein sequence, read N- to C-terminus: Fructose-1,6-bisphosphatase class 1 (331 aa).

Mg(2+) contacts are provided by E88, D108, L110, and D111. Substrate is bound by residues D111–S114 and N201. Mg(2+) is bound at residue E273.

This sequence belongs to the FBPase class 1 family. In terms of assembly, homotetramer. It depends on Mg(2+) as a cofactor.

It is found in the cytoplasm. It catalyses the reaction beta-D-fructose 1,6-bisphosphate + H2O = beta-D-fructose 6-phosphate + phosphate. Its pathway is carbohydrate biosynthesis; gluconeogenesis. The polypeptide is Fructose-1,6-bisphosphatase class 1 (Methylobacillus flagellatus (strain ATCC 51484 / DSM 6875 / VKM B-1610 / KT)).